Consider the following 86-residue polypeptide: Late effector protein 1 (86 aa).

The signal sequence occupies residues methionine 1–serine 24.

This sequence belongs to the lep1 family. Interacts at the cell wall with secreted rep1 repellent peptides.

Its subcellular location is the secreted. It is found in the cell wall. In terms of biological role, core effector contributing to spore formation and tumor formation at the host plant. Modulates surface hydrophobicity promoting cell-cell or cell-surface contacts. Lep1 and rep1 interact in aerial hyphae to form a strong hydrophobic layer. Plays a crucial role in hyphal aggregation that might be a prerequisite for strong proliferation of diploid cells and for induction of the morphological changes associated with spore formation. This chain is Late effector protein 1, found in Mycosarcoma maydis (Corn smut fungus).